Reading from the N-terminus, the 345-residue chain is Ferredoxin--NADP reductase (345 aa).

FAD-binding residues include Asp38, Gln46, Tyr51, Val91, Phe129, Asp295, and Thr336.

The protein belongs to the ferredoxin--NADP reductase type 2 family. As to quaternary structure, homodimer. It depends on FAD as a cofactor.

It carries out the reaction 2 reduced [2Fe-2S]-[ferredoxin] + NADP(+) + H(+) = 2 oxidized [2Fe-2S]-[ferredoxin] + NADPH. In Rhodospirillum rubrum (strain ATCC 11170 / ATH 1.1.1 / DSM 467 / LMG 4362 / NCIMB 8255 / S1), this protein is Ferredoxin--NADP reductase.